Consider the following 262-residue polypeptide: Ubiquitin thioesterase otubain-like (262 aa).

The 199-residue stretch at 64–262 folds into the OTU domain; that stretch reads KFIRRTRPDG…PGHYDILYPN (199 aa). The active site involves D72. The Nucleophile role is filled by C75. Position 168 (I168) interacts with substrate. Residue H255 is part of the active site.

The protein belongs to the peptidase C65 family.

The enzyme catalyses Thiol-dependent hydrolysis of ester, thioester, amide, peptide and isopeptide bonds formed by the C-terminal Gly of ubiquitin (a 76-residue protein attached to proteins as an intracellular targeting signal).. Functionally, possible hydrolase that can remove conjugated ubiquitin from proteins in vitro and may therefore play an important regulatory role at the level of protein turnover by preventing degradation. This Drosophila melanogaster (Fruit fly) protein is Ubiquitin thioesterase otubain-like.